Reading from the N-terminus, the 354-residue chain is UDP-3-O-acylglucosamine N-acyltransferase (354 aa).

Catalysis depends on His-258, which acts as the Proton acceptor.

It belongs to the transferase hexapeptide repeat family. LpxD subfamily. As to quaternary structure, homotrimer.

The enzyme catalyses a UDP-3-O-[(3R)-3-hydroxyacyl]-alpha-D-glucosamine + a (3R)-hydroxyacyl-[ACP] = a UDP-2-N,3-O-bis[(3R)-3-hydroxyacyl]-alpha-D-glucosamine + holo-[ACP] + H(+). It functions in the pathway bacterial outer membrane biogenesis; LPS lipid A biosynthesis. Catalyzes the N-acylation of UDP-3-O-acylglucosamine using 3-hydroxyacyl-ACP as the acyl donor. Is involved in the biosynthesis of lipid A, a phosphorylated glycolipid that anchors the lipopolysaccharide to the outer membrane of the cell. In Rhizobium meliloti (strain 1021) (Ensifer meliloti), this protein is UDP-3-O-acylglucosamine N-acyltransferase.